The following is a 513-amino-acid chain: MAKFEGYSEKQKSHQQYFVYPLLFQEYIYAFAHDYVLNGSEPVEIFGCNTKKFSSLLVKRLIIRMYQQNFWINSVNHPNQDRLLDHSNHFYSEFYSQILSEGFAIVVEIPFSLGQLSCPEEKEIPKFQNLRSIHSIFPFLEDKFLHLHYLSHIEIPYPIHFEILVQLLEYRIQDVPSLHLLRFFLNYYSNWNSLITSMKSIFLLKKENKRLSRFLYNSYVSEYEFFLLFLRKQSSCLRLTSSRTFLERIHFSRKMEHFGVMYPGFFRKTIWFFMDPLMHYVRYQRKVILASKGTLLLKKKWKSYLVNFSQYFFSFWTQPQRIRLNQLTNSCFDFLGYRSNVPINTFLVRNQMLENFILIDTRMKKFDTTAPGTPLIGSLAKAQFCTGSGHPISKPIWTDLSDWDILDRFGRICRNLFHYHSGSSKKQTLYRLKYILRLSCARTLARKHKSTVRTFMQRLGSVFLEEFFTEEEQVFSLMFAKTTHFSFHGSHSERIWYLDIIRIDDLVNPLTLN.

The protein belongs to the intron maturase 2 family. MatK subfamily.

It is found in the plastid. It localises to the chloroplast. Its function is as follows. Usually encoded in the trnK tRNA gene intron. Probably assists in splicing its own and other chloroplast group II introns. The polypeptide is Maturase K (Cynodon dactylon (Bermuda grass)).